The sequence spans 221 residues: Riboflavin kinase (221 aa).

Residues methionine 1 to serine 92 form an H-T-H motif-like region. The tract at residues leucine 93 to leucine 221 is riboflavin kinase. A CDP-binding site is contributed by glycine 102–alanine 107. 2 residues coordinate Mg(2+): threonine 131 and asparagine 133. FMN is bound by residues threonine 188 and glutamate 196. Glutamate 201 to arginine 204 contributes to the CDP binding site.

It belongs to the archaeal riboflavin kinase family. The cofactor is Mg(2+).

It carries out the reaction riboflavin + CTP = CDP + FMN + H(+). It participates in cofactor biosynthesis; FMN biosynthesis; FMN from riboflavin (CTP route): step 1/1. Catalyzes the CTP-dependent phosphorylation of riboflavin (vitamin B2) to form flavin mononucleotide (FMN). This Methanospirillum hungatei JF-1 (strain ATCC 27890 / DSM 864 / NBRC 100397 / JF-1) protein is Riboflavin kinase (ribK).